A 183-amino-acid chain; its full sequence is Myelin-associated oligodendrocyte basic protein (183 aa).

The interval 68–183 is disordered; it reads TRTSRRAKSP…GSPVKASRFW (116 aa). Basic residues predominate over residues 69 to 78; it reads RTSRRAKSPQ. The segment covering 79–96 has biased composition (low complexity); the sequence is RPKQQPAAPPAVVRAPAK. Tandem repeats lie at residues 97 to 106, 107 to 116, 117 to 126, and 127 to 136. Positions 97–136 are 4 X 10 AA tandem repeats of P-R-S-P-P-R-S-E-R-Q; sequence PRSPPRSERQPRSPPRSERQPRSPPRSERQPRSPPRSERQ. 2 positions are modified to phosphoserine: serine 99 and serine 109. A compositionally biased stretch (basic and acidic residues) spans 101–143; that stretch reads PRSERQPRSPPRSERQPRSPPRSERQPRSPPRSERQPRPRPEV. Low complexity predominate over residues 151-164; sequence RPPQKSKQQPRSSP.

Its subcellular location is the cytoplasm. The protein localises to the perinuclear region. Functionally, may play a role in compacting or stabilizing the myelin sheath, possibly by binding the negatively charged acidic phospholipids of the cytoplasmic membrane. In Homo sapiens (Human), this protein is Myelin-associated oligodendrocyte basic protein (MOBP).